Here is a 426-residue protein sequence, read N- to C-terminus: Histidine--tRNA ligase (426 aa).

The protein belongs to the class-II aminoacyl-tRNA synthetase family. As to quaternary structure, homodimer.

The protein resides in the cytoplasm. The catalysed reaction is tRNA(His) + L-histidine + ATP = L-histidyl-tRNA(His) + AMP + diphosphate + H(+). The polypeptide is Histidine--tRNA ligase (Streptococcus pyogenes serotype M28 (strain MGAS6180)).